Consider the following 95-residue polypeptide: MKITPDDIRHVAKLARLDIAETDINAFVSQIGEILDYVDTLNQVATENVEPMAHAISLTNAFREDTVREAGPVEKILNNAPAAADNMFCVPKIIE.

Belongs to the GatC family. In terms of assembly, heterotrimer of A, B and C subunits.

It catalyses the reaction L-glutamyl-tRNA(Gln) + L-glutamine + ATP + H2O = L-glutaminyl-tRNA(Gln) + L-glutamate + ADP + phosphate + H(+). The catalysed reaction is L-aspartyl-tRNA(Asn) + L-glutamine + ATP + H2O = L-asparaginyl-tRNA(Asn) + L-glutamate + ADP + phosphate + 2 H(+). Allows the formation of correctly charged Asn-tRNA(Asn) or Gln-tRNA(Gln) through the transamidation of misacylated Asp-tRNA(Asn) or Glu-tRNA(Gln) in organisms which lack either or both of asparaginyl-tRNA or glutaminyl-tRNA synthetases. The reaction takes place in the presence of glutamine and ATP through an activated phospho-Asp-tRNA(Asn) or phospho-Glu-tRNA(Gln). The sequence is that of Aspartyl/glutamyl-tRNA(Asn/Gln) amidotransferase subunit C from Desulfosudis oleivorans (strain DSM 6200 / JCM 39069 / Hxd3) (Desulfococcus oleovorans).